Consider the following 263-residue polypeptide: Putative S-adenosyl-L-methionine-dependent methyltransferase Mjls_0079 (263 aa).

Residues Asp121 and 150-151 each bind S-adenosyl-L-methionine; that span reads ES.

This sequence belongs to the UPF0677 family.

Exhibits S-adenosyl-L-methionine-dependent methyltransferase activity. The polypeptide is Putative S-adenosyl-L-methionine-dependent methyltransferase Mjls_0079 (Mycobacterium sp. (strain JLS)).